The chain runs to 682 residues: Potassium-transporting ATPase ATP-binding subunit (682 aa).

The next 4 helical transmembrane spans lie at 35 to 55, 62 to 82, 219 to 239, and 254 to 274; these read VMFI…AMAG, ATFT…ANFA, IALT…TATI, and VLVA…LSAI. D307 (4-aspartylphosphate intermediate) is an active-site residue. ATP contacts are provided by residues D344, E348, 377-384, and K395; that span reads FTAQTRMS. Mg(2+) is bound by residues D518 and D522. Transmembrane regions (helical) follow at residues 588 to 608, 616 to 636, and 656 to 676; these read FAII…LNVM, AILS…PLAL, and IYGL…DLLL.

The protein belongs to the cation transport ATPase (P-type) (TC 3.A.3) family. Type IA subfamily. In terms of assembly, the system is composed of three essential subunits: KdpA, KdpB and KdpC.

It localises to the cell inner membrane. It catalyses the reaction K(+)(out) + ATP + H2O = K(+)(in) + ADP + phosphate + H(+). In terms of biological role, part of the high-affinity ATP-driven potassium transport (or Kdp) system, which catalyzes the hydrolysis of ATP coupled with the electrogenic transport of potassium into the cytoplasm. This subunit is responsible for energy coupling to the transport system and for the release of the potassium ions to the cytoplasm. The chain is Potassium-transporting ATPase ATP-binding subunit from Klebsiella pneumoniae (strain 342).